Here is a 97-residue protein sequence, read N- to C-terminus: HssA/B-like protein 38 (97 aa).

The interval 1 to 29 (MTLFSSISSISNPMTSSKSSISSFGSGTS) is disordered.

It belongs to the hssA/B family.

The polypeptide is HssA/B-like protein 38 (hssl38) (Dictyostelium discoideum (Social amoeba)).